The chain runs to 490 residues: 2,3-bisphosphoglycerate-independent phosphoglycerate mutase (490 aa).

2 residues coordinate Mn(2+): Asp-9 and Ser-59. The active-site Phosphoserine intermediate is Ser-59. Substrate is bound by residues His-116, Arg-145–Asp-146, Arg-175, Arg-181, Arg-246–Arg-249, and Lys-319. Residues Asp-385, His-389, Asp-426, His-427, and His-444 each coordinate Mn(2+).

The protein belongs to the BPG-independent phosphoglycerate mutase family. Monomer. Mn(2+) is required as a cofactor.

The enzyme catalyses (2R)-2-phosphoglycerate = (2R)-3-phosphoglycerate. Its pathway is carbohydrate degradation; glycolysis; pyruvate from D-glyceraldehyde 3-phosphate: step 3/5. Its function is as follows. Catalyzes the interconversion of 2-phosphoglycerate and 3-phosphoglycerate. In Helicobacter hepaticus (strain ATCC 51449 / 3B1), this protein is 2,3-bisphosphoglycerate-independent phosphoglycerate mutase.